The primary structure comprises 266 residues: Large ribosomal subunit protein uL3 (266 aa).

Residues 124-149 are disordered; it reads NQKIGPKSHGGGGGSKPVRQTGSLGD.

The protein belongs to the universal ribosomal protein uL3 family. Part of the 50S ribosomal subunit. Forms a cluster with proteins L14 and L19.

In terms of biological role, one of the primary rRNA binding proteins, it binds directly near the 3'-end of the 23S rRNA, where it nucleates assembly of the 50S subunit. The protein is Large ribosomal subunit protein uL3 of Mycoplasmopsis pulmonis (strain UAB CTIP) (Mycoplasma pulmonis).